The sequence spans 785 residues: Semaphorin-3F (785 aa).

Residues 1 to 18 (MLVAGLLLWASLLTGAWP) form the signal peptide. Positions 31-545 (RVRLSFKELK…SAVGVTHLSL (515 aa)) constitute a Sema domain. Residue asparagine 53 is glycosylated (N-linked (GlcNAc...) asparagine). Cysteine 104 and cysteine 115 are disulfide-bonded. Asparagine 126 carries an N-linked (GlcNAc...) asparagine glycan. Intrachain disulfides connect cysteine 133–cysteine 142, cysteine 300–cysteine 412, cysteine 324–cysteine 372, cysteine 548–cysteine 566, and cysteine 678–cysteine 746. An Ig-like C2-type domain is found at 605-690 (ANKNAVESVQ…TENNFKHVVT (86 aa)). The tract at residues 752–785 (HVPPSPREAPGAPRSPEPQDQKKPRNRRHHPPDT) is disordered. Residues 775–785 (PRNRRHHPPDT) show a composition bias toward basic residues.

It belongs to the semaphorin family. Expressed abundantly but differentially in a variety of neural and nonneural tissues. There is high expression in mammary gland, kidney, fetal brain, and lung and lower expression in heart and liver.

The protein localises to the secreted. May play a role in cell motility and cell adhesion. This chain is Semaphorin-3F (SEMA3F), found in Homo sapiens (Human).